Consider the following 525-residue polypeptide: NGFI-A-binding protein 2 (525 aa).

The tract at residues 1-31 (MHRAPSPTAEQPPGRGDNTRRTPQPRFKASA) is disordered. A Phosphoserine modification is found at S6. An NCD1 region spans residues 35 to 113 (ALPRTLGELQ…REWATNPGLF (79 aa)). The segment at 135 to 238 (GTRKGSMSNG…GAGGGPDRLE (104 aa)) is disordered. S157, S159, S162, and S171 each carry phosphoserine. Positions 212-234 (AGGGVSEGPGVGGVAAGGAGGGP) are enriched in gly residues. The tract at residues 267–356 (LLKLNKKLAR…SRQVARESTY (90 aa)) is NCD2. The tract at residues 353 to 384 (ESTYLSSLKGSRLHSEELGGPPLKKLKQEVGE) is necessary for nuclear localization. Residue K379 forms a Glycyl lysine isopeptide (Lys-Gly) (interchain with G-Cter in SUMO1) linkage. The interval 381 to 416 (EVGEQSHNEIQQPPPGPESYAPPYRPSLEEDSASLS) is disordered. A Phosphoserine modification is found at S479. Residues 501–525 (APGPHPALVEGRRSSVKVEAEASRQ) are disordered. The segment covering 510 to 525 (EGRRSSVKVEAEASRQ) has biased composition (basic and acidic residues). Residue K517 forms a Glycyl lysine isopeptide (Lys-Gly) (interchain with G-Cter in SUMO1); alternate linkage. A Glycyl lysine isopeptide (Lys-Gly) (interchain with G-Cter in SUMO2); alternate cross-link involves residue K517.

Belongs to the NAB family. In terms of assembly, homomultimers may associate with EGR1 bound to DNA. Post-translationally, sumoylation by EGR2 represses EGR2 transcriptional activity in hindbrain. Highly expressed in brain and thymus, and at lower levels in spleen, kidney, heart and testis. Isoform 1 is predominantly expressed in testis, whereas isoform 3 is more abundant in thymus.

The protein resides in the nucleus. In terms of biological role, acts as a transcriptional repressor for zinc finger transcription factors EGR1 and EGR2. Isoform 2 lacks repression ability. The sequence is that of NGFI-A-binding protein 2 (Nab2) from Mus musculus (Mouse).